We begin with the raw amino-acid sequence, 1322 residues long: Myosin-1 (1322 aa).

The Myosin motor domain occupies 42–728 (AGVSDMTLLT…TLFALETMRD (687 aa)). 135–142 (GESGAGKT) serves as a coordination point for ATP. Ser369 is subject to Phosphoserine. Residues 417-499 (VIGVLDIYGF…PGIFSALNDA (83 aa)) form an actin-binding region. IQ domains are found at residues 732-752 (HNMAMRIQRAWRAFMRRREES) and 753-778 (ARRIQRAWRRSREGHEFLELREYGHQ). A TH1 domain is found at 786–980 (RRRFSLISMR…SGEPPTSVSR (195 aa)). Disordered regions lie at residues 966-1090 (IVSV…MPSY) and 1137-1162 (VQQLGSSSTAQTRSVPAPPSASATPA). Low complexity-rich tracts occupy residues 1000-1017 (SRPVTSRRPVPTVLPTTT) and 1027-1056 (GGTASASALAVPTTSTVAPASSASGNASGA). Composition is skewed to polar residues over residues 1078–1087 (PATSAPSSGM) and 1137–1148 (VQQLGSSSTAQT). The SH3 domain occupies 1184–1243 (RRLPRYRALYDFETQEAGELPLRTGDIVELEEKEENGWWLVKKGSTEGWSPADYLELIAE). The disordered stretch occupies residues 1246 to 1300 (AAKPRPPPPAKPASAKPAAAPARVSQSSVTSSWTPPDSHAAPVAVMPGMGDPGGF). Residues 1257-1267 (PASAKPAAAPA) show a composition bias toward low complexity. Residues 1269 to 1280 (VSQSSVTSSWTP) are compositionally biased toward polar residues.

The protein belongs to the TRAFAC class myosin-kinesin ATPase superfamily. Myosin family. Phosphorylation of the TEDS site (Ser-369) is required for the polarization of the actin cytoskeleton. Phosphorylation probably activates the myosin-I ATPase activity.

It is found in the cytoplasm. The protein localises to the cytoskeleton. The protein resides in the actin patch. Functionally, type-I myosin implicated in the organization of the actin cytoskeleton. Required for proper actin cytoskeleton polarization. At the cell cortex, assembles in patch-like structures together with proteins from the actin-polymerizing machinery and promotes actin assembly. Functions as actin nucleation-promoting factor (NPF) for the Arp2/3 complex. The sequence is that of Myosin-1 (MYO1) from Malassezia globosa (strain ATCC MYA-4612 / CBS 7966) (Dandruff-associated fungus).